We begin with the raw amino-acid sequence, 361 residues long: UDP-N-acetylglucosamine--N-acetylmuramyl-(pentapeptide) pyrophosphoryl-undecaprenol N-acetylglucosamine transferase (361 aa).

UDP-N-acetyl-alpha-D-glucosamine-binding positions include 12–14, N126, R167, S192, I247, and Q292; that span reads TGG.

This sequence belongs to the glycosyltransferase 28 family. MurG subfamily.

The protein localises to the cell inner membrane. It catalyses the reaction di-trans,octa-cis-undecaprenyl diphospho-N-acetyl-alpha-D-muramoyl-L-alanyl-D-glutamyl-meso-2,6-diaminopimeloyl-D-alanyl-D-alanine + UDP-N-acetyl-alpha-D-glucosamine = di-trans,octa-cis-undecaprenyl diphospho-[N-acetyl-alpha-D-glucosaminyl-(1-&gt;4)]-N-acetyl-alpha-D-muramoyl-L-alanyl-D-glutamyl-meso-2,6-diaminopimeloyl-D-alanyl-D-alanine + UDP + H(+). It functions in the pathway cell wall biogenesis; peptidoglycan biosynthesis. Cell wall formation. Catalyzes the transfer of a GlcNAc subunit on undecaprenyl-pyrophosphoryl-MurNAc-pentapeptide (lipid intermediate I) to form undecaprenyl-pyrophosphoryl-MurNAc-(pentapeptide)GlcNAc (lipid intermediate II). This chain is UDP-N-acetylglucosamine--N-acetylmuramyl-(pentapeptide) pyrophosphoryl-undecaprenol N-acetylglucosamine transferase, found in Syntrophus aciditrophicus (strain SB).